We begin with the raw amino-acid sequence, 432 residues long: Elongation factor 1-gamma (432 aa).

The 82-residue stretch at 1 to 82 folds into the GST N-terminal domain; sequence LYTYPENWRA…YVSNEELRGS (82 aa). A GST C-terminal domain is found at 83-211; sequence TPEAAAQVVQ…VKLCEKMAQF (129 aa). N6-acetyllysine is present on residues lysine 142 and lysine 207. Basic and acidic residues predominate over residues 216-249; the sequence is FAESQPKKDTPRKEKGSREEKQKPQAERKEEKKA. Positions 216–258 are disordered; that stretch reads FAESQPKKDTPRKEKGSREEKQKPQAERKEEKKAAAPAPEEEL. Lysine 248 is covalently cross-linked (Glycyl lysine isopeptide (Lys-Gly) (interchain with G-Cter in SUMO1)). The EF-1-gamma C-terminal domain maps to 271-432; sequence AKDPFAHLPK…KAFNQGKIFK (162 aa). Lysine 280 participates in a covalent cross-link: Glycyl lysine isopeptide (Lys-Gly) (interchain with G-Cter in SUMO2). Residue lysine 396 is modified to N6-acetyllysine. An N6-acetyllysine; alternate modification is found at lysine 429. Lysine 429 carries the post-translational modification N6-malonyllysine; alternate.

As to quaternary structure, EF-1 is composed of four subunits: alpha, beta, delta, and gamma.

Functionally, probably plays a role in anchoring the complex to other cellular components. This chain is Elongation factor 1-gamma (EEF1G), found in Sus scrofa (Pig).